The sequence spans 251 residues: Proteasome subunit alpha type-7 (251 aa).

Belongs to the peptidase T1A family. The 26S proteasome consists of a 20S proteasome core and two 19S regulatory subunits. The 20S proteasome core is composed of 28 subunits that are arranged in four stacked rings, resulting in a barrel-shaped structure. The two end rings are each formed by seven alpha subunits, and the two central rings are each formed by seven beta subunits. The catalytic chamber with the active sites is on the inside of the barrel.

It localises to the cytoplasm. The protein localises to the nucleus. Its function is as follows. The proteasome is a multicatalytic proteinase complex which is characterized by its ability to cleave peptides with Arg, Phe, Tyr, Leu, and Glu adjacent to the leaving group at neutral or slightly basic pH. The proteasome has an ATP-dependent proteolytic activity. The polypeptide is Proteasome subunit alpha type-7 (psma7) (Carassius auratus (Goldfish)).